Consider the following 122-residue polypeptide: Small ribosomal subunit protein uS13 (122 aa).

Positions 95–116 (GLPVRGQKTKTNARTRKGRRKT) are enriched in basic residues. The tract at residues 95 to 122 (GLPVRGQKTKTNARTRKGRRKTVGAATK) is disordered.

It belongs to the universal ribosomal protein uS13 family. Part of the 30S ribosomal subunit. Forms a loose heterodimer with protein S19. Forms two bridges to the 50S subunit in the 70S ribosome.

Located at the top of the head of the 30S subunit, it contacts several helices of the 16S rRNA. In the 70S ribosome it contacts the 23S rRNA (bridge B1a) and protein L5 of the 50S subunit (bridge B1b), connecting the 2 subunits; these bridges are implicated in subunit movement. Contacts the tRNAs in the A and P-sites. The polypeptide is Small ribosomal subunit protein uS13 (Campylobacter concisus (strain 13826)).